The following is a 353-amino-acid chain: MTLNPPPSQQTSHSPRRIPNRRVLIVGNYCHDVLIQNGSVVAETLGGAASFISNVLDSSSVSCDLVSKVGHDFRYEVTHSPIVAPEKETTVFEAYFDLGIDGIGHADRVLKRVSACDPILPSDIPDSRFDFGMAVGVGGEILPETLEKMVEICDVVAVDIQALIRVFDPVDGAVKLVDLKESGFYHILHRIGFLKASSDEALFMDVEQMKHLCCVVVTNGEKGCRIYHKDDEMTVPPFLAKQVDPTGAGDSFLGGLIVGLVEGLTVPDAALLGNLFGSITVEHIGQPKFDLMMLQKVKDEVQRRKKQCNISSSHNNDHNEFHERLSPARFSCVDSQLQPKLLVNGHSCDDRSL.

ATP-binding positions include S197, 247-250 (GAGD), and N274. The Proton acceptor role is filled by D250.

It belongs to the carbohydrate kinase pfkB family.

The catalysed reaction is myo-inositol + ATP = 1D-myo-inositol 3-phosphate + ADP + H(+). Its function is as follows. Kinase that phosphorylates myo-inositol to produce multiple myo-inositol monophosphates. Participates in phytic acid biosynthesis in developing seeds. Phytic acid is the primary storage form of phosphorus in cereal grains and other plant seeds. The polypeptide is Inositol 3-kinase (Arabidopsis thaliana (Mouse-ear cress)).